Consider the following 1012-residue polypeptide: MKMEDLFSLLPWLRDVPVQNQFSLDDKMYSDALKLFTESKSILSNNVSPIGSTTPEELERYMFAFILYASKRLGAKTTGDASEGSNQSGITLCQKLKAVKLNLVDFFKELPQFVVKIGPILSDMYGADWEKRLEAKELQANFVHLSLLSKYYKRAYQEFFKTNEVDKEVADPGTSSSDSISDYYRFGWLLFLALRVHAFSRFKDLVTCTNGIVSVLAILIIHIPARLRKFSALDLPLFEKKIDRGVNLVASLCQKYDTSEDEVKHMMEKANELILEILKKNPCSASLCKTENLENIDPDDLTYFEDLLEDSSLPNCISMLEKDYDAAIWNKGDIDERVFVNVDDSLLGSGSLSGGAINISGLREIRCNGLFNETIASPLSPCRSPALHVNGARGGVNIRMISTPVSTAMTTAKWLRTYISPLPSKPSPQLEKYLMSCDRNISSEVVRRAHIIMEAIFPNSALGERCIAGSLPNSNLTDNIWAQQRRLEALKLYYRVLETMCTAEAQLLHANNLTSLLTNERFHRCMLACSAELVLATHKTVTMLFPAVLEKTGITAFDLSKVIESFIRHEDSLPRELRRHLNSLEERLLESMAWEKGSSMDNSLIIARPALSAGINRFGLLAEPMPFLNAMAAHIEVSTGGLPPLPSSCKHEFAAGQNGDIRSPKRACTEYRSVLVERNSFTSPVKDRLINNLKQKLTPPALQSAFASPTRLSPGGGGETCAETGINIFFSKIVKLAAVRINGMIERLEKLEKQSQTQQLREQLRENVYCRFHIILNQRTSLFFNRHIDQIILCAFYGVAKISQYELTFKEIILNYRKQPQCKPQVFRSVFVDWSFSRRNRQGQDHVDIITFYNEVFIPSVKPLLGELGPQGACVKTDLIPESNNDKDGQCPGSPKLSTFPSLPDMSPKKVAKNVYVSPLRSSKMDALISNSSKSYYACVGESTHAFQSPSKDLTAINDRLNSTSKVRGALNFDTDAGLVSDSLVANSLYLQNGNCATTSSVGPLKTEQPDS.

Positions 403–604 (TPVSTAMTTA…EKGSSMDNSL (202 aa)) are domain A. The pocket stretch occupies residues 403-863 (TPVSTAMTTA…NEVFIPSVKP (461 aa)). Residues 605–723 (IIARPALSAG…PGGGGETCAE (119 aa)) are spacer. The domain B stretch occupies residues 724–863 (TGINIFFSKI…NEVFIPSVKP (140 aa)). Positions 884 to 905 (NNDKDGQCPGSPKLSTFPSLPD) are disordered.

It belongs to the retinoblastoma protein (RB) family.

The protein localises to the nucleus. Its function is as follows. Regulator of biological processes that recruits a histone deacetylase to control gene transcription. May play a role in the entry into mitosis, negatively regulating the cell proliferation. Formation of stable complexes with geminiviridae replication-associated proteins may create a cellular environment which favors viral DNA replication. This is Retinoblastoma-related protein (RB) from Oxybasis rubra (Red goosefoot).